The sequence spans 91 residues: Movement protein TGBp3 (91 aa).

Residues 1–23 (MLGTRNIPTTSGLPLPPPSSSLS) are Lumenal-facing. A helical transmembrane segment spans residues 24–46 (AYIFPTILAIIFAVFALVAIHIT). Over 47 to 91 (TPEPFCTIHIDGASITITNCPDPAAILNKVAIGPWRGLSYHNNLK) the chain is Cytoplasmic.

It belongs to the Tymovirales TGBp3 protein family.

Its subcellular location is the host endoplasmic reticulum membrane. Plays a role in viral cell-to-cell propagation, by facilitating genome transport to neighboring plant cells through plasmosdesmata. May induce the formation of granular vesicles derived from the Endoplasmic reticulum, which align on actin filaments. The sequence is that of Movement protein TGBp3 from Cymbidium mosaic virus (strain Singapore).